Here is a 128-residue protein sequence, read N- to C-terminus: Small ribosomal subunit protein eS8 (128 aa).

Residues 1 to 31 (MAWYQGNDLRKPTGGKKTRHRKKRKHELGRP) are disordered. Positions 13 to 27 (TGGKKTRHRKKRKHE) are enriched in basic residues.

Belongs to the eukaryotic ribosomal protein eS8 family. In terms of assembly, part of the 30S ribosomal subunit.

This Staphylothermus marinus (strain ATCC 43588 / DSM 3639 / JCM 9404 / F1) protein is Small ribosomal subunit protein eS8.